Here is a 436-residue protein sequence, read N- to C-terminus: Tol-Pal system protein TolB (436 aa).

Positions 1–19 (MVKCSLIRALMVVAGLVGA) are cleaved as a signal peptide.

Belongs to the TolB family. As to quaternary structure, the Tol-Pal system is composed of five core proteins: the inner membrane proteins TolA, TolQ and TolR, the periplasmic protein TolB and the outer membrane protein Pal. They form a network linking the inner and outer membranes and the peptidoglycan layer.

The protein localises to the periplasm. In terms of biological role, part of the Tol-Pal system, which plays a role in outer membrane invagination during cell division and is important for maintaining outer membrane integrity. This chain is Tol-Pal system protein TolB, found in Rhizobium etli (strain ATCC 51251 / DSM 11541 / JCM 21823 / NBRC 15573 / CFN 42).